The chain runs to 224 residues: UPF0758 protein PD_0117 (224 aa).

The region spanning 102 to 224 (SIHDPISAGR…PVSFAEHGWL (123 aa)) is the MPN domain. His173, His175, and Asp186 together coordinate Zn(2+). The JAMM motif motif lies at 173 to 186 (HNHPSGNREPSPAD).

Belongs to the UPF0758 family.

This Xylella fastidiosa (strain Temecula1 / ATCC 700964) protein is UPF0758 protein PD_0117.